The primary structure comprises 399 residues: MAQPVWAGVDAGKADHYCMVINDDAQRLLSQRVANDEAALLELIAAVTTLADGGEVTWAIDLNAGGAALLIALLIAAGQRLLYIPGRTVHHAAGSYRGEGKTDAKDAAIIADQARMRHDLQPLRAGDDIAVELRILTSRRSDLVADRTRAIEPNARPAAGILSALERAFDYNKSRAALILLTGYQTPDALRSAGGARVAAFLRKRKARNADTVAATALQAANAQHSIVPGQQLAATVVARLAKEVMALDTEIGDTDAMIEERFRRHRHAEIILSMPGFGVILGAEFLAATGGDMAAFASADRLAGVAGLAPVPRDSGRISGNLKRPRRYDRRLLRACYLSALVSIRTDPSSRTYYDRKRTEGKRHTQAVLALARRRLNVLWAMLRDHAVYHPATTTAAA.

It belongs to the transposase IS1111A/IS1328/IS1533 family.

In Mycobacterium paratuberculosis, this protein is Insertion element IS900 uncharacterized 42 kDa protein.